A 226-amino-acid polypeptide reads, in one-letter code: Teichuronic acid biosynthesis protein TuaF (226 aa).

A run of 2 helical transmembrane segments spans residues 15 to 35 and 202 to 222; these read NIIW…ILPS and VLGV…PEFF.

Its subcellular location is the cell membrane. It functions in the pathway cell wall biogenesis; teichuronic acid biosynthesis. In Bacillus subtilis (strain 168), this protein is Teichuronic acid biosynthesis protein TuaF (tuaF).